The primary structure comprises 296 residues: UBX domain-containing protein 1-A (296 aa).

In terms of domain architecture, UBA spans 1–42 (MAECSTLESLIEMGFSSTRAEKALTATGNQGIEPAMDWLVEH). The interval 43-216 (EDDPDIDEPS…VQEPPTKKEY (174 aa)) is disordered. The segment covering 61-75 (TDTADTTDTTDTTDT) has biased composition (low complexity). Composition is skewed to basic and acidic residues over residues 86-100 (PLTE…KRMM), 107-123 (QNER…EQEK), and 138-178 (KMQE…DRAR). Residues 87–177 (LTEEEKEKQT…KIARDKADRA (91 aa)) are a coiled coil. A compositionally biased stretch (low complexity) spans 191 to 206 (PAETSIPATTPSPSSP). One can recognise a UBX domain in the interval 214-293 (KEYDQCRIQV…GLVPTAVLIV (80 aa)).

It localises to the cytoplasm. In terms of biological role, component of a complex required to couple deglycosylation and proteasome-mediated degradation of misfolded proteins in the endoplasmic reticulum that are retrotranslocated in the cytosol. Involved in ubiquitin-proteasome systems. This is UBX domain-containing protein 1-A (ubxn1-a) from Xenopus laevis (African clawed frog).